A 192-amino-acid polypeptide reads, in one-letter code: Signal peptidase complex catalytic subunit SEC11C (192 aa).

Over 2–28 the chain is Cytoplasmic; it reads VRAGAVGTHLPASGLDIFGDLRKMNKR. A helical; Signal-anchor for type II membrane protein transmembrane segment spans residues 29-48; it reads QLYYQVLNFAMIVSSALMIW. Over 49 to 192 the chain is Lumenal; that stretch reads KGLIVLTGSE…GAYVLLKRES (144 aa). Residues S68, H108, and D134 each act as charge relay system in the active site. Positions 177–188 are C-terminal short (CTS) helix; that stretch reads ALLAVMGAYVLL.

Belongs to the peptidase S26B family. Component of the signal peptidase complex paralog C (SPC-C) composed of a catalytic subunit SEC11C and three accessory subunits SPCS1, SPCS2 and SPCS3. Within the complex, interacts with SPCS2 and SPCS3. The complex induces a local thinning of the ER membrane which is used to measure the length of the signal peptide (SP) h-region of protein substrates. This ensures the selectivity of the complex towards h-regions shorter than 18-20 amino acids. Post-translationally, may undergo processing at the N-terminus.

It is found in the endoplasmic reticulum membrane. It catalyses the reaction Cleavage of hydrophobic, N-terminal signal or leader sequences from secreted and periplasmic proteins.. In terms of biological role, catalytic component of the signal peptidase complex (SPC) which catalyzes the cleavage of N-terminal signal sequences from nascent proteins as they are translocated into the lumen of the endoplasmic reticulum. Specifically cleaves N-terminal signal peptides that contain a hydrophobic alpha-helix (h-region) shorter than 18-20 amino acids. This chain is Signal peptidase complex catalytic subunit SEC11C (SEC11C), found in Canis lupus familiaris (Dog).